Here is a 420-residue protein sequence, read N- to C-terminus: Glucose-1-phosphate adenylyltransferase (420 aa).

Residues Tyr107, Gly172, 187 to 188 (EK), and Ser205 contribute to the alpha-D-glucose 1-phosphate site.

This sequence belongs to the bacterial/plant glucose-1-phosphate adenylyltransferase family. Homotetramer.

It carries out the reaction alpha-D-glucose 1-phosphate + ATP + H(+) = ADP-alpha-D-glucose + diphosphate. Its pathway is glycan biosynthesis; glycogen biosynthesis. Involved in the biosynthesis of ADP-glucose, a building block required for the elongation reactions to produce glycogen. Catalyzes the reaction between ATP and alpha-D-glucose 1-phosphate (G1P) to produce pyrophosphate and ADP-Glc. The sequence is that of Glucose-1-phosphate adenylyltransferase from Agrobacterium fabrum (strain C58 / ATCC 33970) (Agrobacterium tumefaciens (strain C58)).